The primary structure comprises 346 residues: MNWNEILFWLLKSGLFFFILITACAYYTLAERKVAGFIQDRKGPNRAGIWGLLQPLADGIKFLTKEEVFPTQVNKIMYLIAPAISMTCAIMAWSVVPLGGRIPLPQWLQDRTGLVFLDLQIANPDTGILFLFAISSLAVYGIIIAGWASNNKYSLLGAIRSTAQMISYELPLSMSVVSIVILTGSLKLTDISASQAGLWNIFKLPGFIAFCLFVVAMFAETNRLPFDLAEAESELVVGFHTEYGAFKFALFFIAEYMNMITMSCVVTLLFFGGYQVPFGILEGHVLQSLFGLFFFLGKVLFFTFLFVWVRWTLPRFRYDQLMSLGWKKLIPWAVLNILIASLYIQF.

Transmembrane regions (helical) follow at residues 6-26 (ILFW…ACAY), 76-96 (IMYL…WSVV), 128-148 (ILFL…AGWA), 166-186 (ISYE…TGSL), 198-218 (LWNI…VAMF), 260-280 (ITMS…PFGI), 289-309 (LFGL…FVWV), and 324-344 (LGWK…SLYI).

It belongs to the complex I subunit 1 family. In terms of assembly, NDH-1 is composed of 14 different subunits. Subunits NuoA, H, J, K, L, M, N constitute the membrane sector of the complex.

The protein localises to the cell inner membrane. It catalyses the reaction a quinone + NADH + 5 H(+)(in) = a quinol + NAD(+) + 4 H(+)(out). Functionally, NDH-1 shuttles electrons from NADH, via FMN and iron-sulfur (Fe-S) centers, to quinones in the respiratory chain. The immediate electron acceptor for the enzyme in this species is believed to be ubiquinone. Couples the redox reaction to proton translocation (for every two electrons transferred, four hydrogen ions are translocated across the cytoplasmic membrane), and thus conserves the redox energy in a proton gradient. This subunit may bind ubiquinone. The sequence is that of NADH-quinone oxidoreductase subunit H from Leptospira borgpetersenii serovar Hardjo-bovis (strain JB197).